A 406-amino-acid polypeptide reads, in one-letter code: Tryptophan synthase beta chain (406 aa).

An N6-(pyridoxal phosphate)lysine modification is found at lysine 99.

This sequence belongs to the TrpB family. As to quaternary structure, tetramer of two alpha and two beta chains. Pyridoxal 5'-phosphate serves as cofactor.

The catalysed reaction is (1S,2R)-1-C-(indol-3-yl)glycerol 3-phosphate + L-serine = D-glyceraldehyde 3-phosphate + L-tryptophan + H2O. The protein operates within amino-acid biosynthesis; L-tryptophan biosynthesis; L-tryptophan from chorismate: step 5/5. Functionally, the beta subunit is responsible for the synthesis of L-tryptophan from indole and L-serine. In Phenylobacterium zucineum (strain HLK1), this protein is Tryptophan synthase beta chain.